A 262-amino-acid chain; its full sequence is Histone chaperone cia1 (262 aa).

Positions 157-262 are disordered; sequence IQWDNPDFDD…KPEEKPETSQ (106 aa). Coiled-coil stretches lie at residues 173 to 196 and 223 to 253; these read DADE…EGEG and KGSE…AEEK. Composition is skewed to acidic residues over residues 173-219 and 226-242; these read DADE…GEGE and EEEE…EEES. A compositionally biased stretch (basic and acidic residues) spans 250–262; sequence AEEKPEEKPETSQ.

This sequence belongs to the ASF1 family. Interacts with histone H3 and histone H4.

Its subcellular location is the nucleus. Functionally, histone chaperone that facilitates histone deposition and histone exchange and removal during nucleosome assembly and disassembly. This Schizosaccharomyces pombe (strain 972 / ATCC 24843) (Fission yeast) protein is Histone chaperone cia1 (cia1).